A 234-amino-acid polypeptide reads, in one-letter code: Sugar fermentation stimulation protein homolog (234 aa).

The protein belongs to the SfsA family.

This chain is Sugar fermentation stimulation protein homolog, found in Shewanella baltica (strain OS223).